We begin with the raw amino-acid sequence, 560 residues long: Oxygen-dependent choline dehydrogenase (560 aa).

6 to 35 (DYIIIGGGSAGSVLGGRLSEDVSNNVLVLE) contributes to the FAD binding site. Histidine 472 acts as the Proton acceptor in catalysis.

This sequence belongs to the GMC oxidoreductase family. Requires FAD as cofactor.

The catalysed reaction is choline + A = betaine aldehyde + AH2. It carries out the reaction betaine aldehyde + NAD(+) + H2O = glycine betaine + NADH + 2 H(+). It participates in amine and polyamine biosynthesis; betaine biosynthesis via choline pathway; betaine aldehyde from choline (cytochrome c reductase route): step 1/1. Its function is as follows. Involved in the biosynthesis of the osmoprotectant glycine betaine. Catalyzes the oxidation of choline to betaine aldehyde and betaine aldehyde to glycine betaine at the same rate. The chain is Oxygen-dependent choline dehydrogenase from Staphylococcus xylosus.